The chain runs to 700 residues: Calpain-2 catalytic subunit (700 aa).

A2 carries the N-acetylalanine modification. Positions 2–19 (AGIAAKLVKDREAAEGLG) are cleaved as a propeptide — anchors to the small subunit. Residues 45–344 (LFQDPSFPAI…YSRLEICNLT (300 aa)) form the Calpain catalytic domain. Residues I89, G91, and D96 each contribute to the Ca(2+) site. C105 is a catalytic residue. Residues E175, Q229, and K230 each coordinate Ca(2+). Active-site residues include H262 and N286. Ca(2+) is bound by residues E292, D299, and E323. Residues 345–514 (PDTLTSDTYK…KKADYQAVDD (170 aa)) form a domain III region. Positions 515 to 529 (EIEANLEEFDISEDD) are linker. A domain IV region spans residues 530–700 (IDDGFRRLFA…LISWLCFSVL (171 aa)). Ca(2+)-binding residues include A542, D545, E547, E552, D585, D587, S589, K591, E596, D615, D617, S619, T621, E626, D658, and N661. EF-hand domains follow at residues 572-605 (FSIE…TKIQ) and 602-637 (TKIQ…AGFK). In terms of domain architecture, EF-hand 3 spans 667–700 (VRLETLFKIFKQLDPENTGTIELDLISWLCFSVL).

It belongs to the peptidase C2 family. Forms a heterodimer with a small (regulatory) subunit (CAPNS1). Interacts with CPEB3; this leads to cleavage of CPEB3. Ca(2+) serves as cofactor.

It localises to the cytoplasm. The protein resides in the cell membrane. It catalyses the reaction Broad endopeptidase specificity.. Its activity is regulated as follows. Activated by 200-1000 micromolar concentrations of calcium and inhibited by calpastatin. In terms of biological role, calcium-regulated non-lysosomal thiol-protease which catalyzes limited proteolysis of substrates involved in cytoskeletal remodeling and signal transduction. Proteolytically cleaves MYOC at 'Arg-226'. Proteolytically cleaves CPEB3 following neuronal stimulation which abolishes CPEB3 translational repressor activity, leading to translation of CPEB3 target mRNAs. The protein is Calpain-2 catalytic subunit (CAPN2) of Macaca fascicularis (Crab-eating macaque).